We begin with the raw amino-acid sequence, 539 residues long: MSFKCIFLTGGVVSSLGKGLTAASLALLLERQSLKVSMLKLDPYLNVDPGTMNPYEHGEVYVTNDGIETDLDLGHYHRFSSVKLSKYSTATSGQIYARVIKKEREGVYLGSTVQVIPHITNEIIEVILECARENQPDVLIVEIGGTVGDIESLPFLEAIRQFRYEHAENCFSIHMTYVPYLKAAGEVKTKPTQHSVQSLRSIGIIPDAILCRSESSLSPDVKKKISLFCNVPNNAVFNVVDIEHSIYEMPLMLSQENISTFITEKLGLFTKQEDLSDWKTLVERLRNPSLDKVRIGLVGKYVQHKDAYKSVFEALTHAALSLNSSVEILPLDSEDPHFLETLEQCDGCLVPGGFGSRGWEGKITAAKLCRERGIPYFGICLGMQVLVVEYARNVLRLEKANSTEMDAETPDPVICMMDGQASLVATGGTMRLGAYPCLISPGTKVHEAYGESEVMERHRHRYEVNFDYVQQFKDFGLNVVGTCPQQGLCEIVEIENHPWMIGVQFHPEFLSKLIAPHPLFVGFIQAAILYSRNKSYVQA.

The tract at residues 1-268 (MSFKCIFLTG…STFITEKLGL (268 aa)) is amidoligase domain. CTP is bound at residue Ser14. Ser14 provides a ligand contact to UTP. 15 to 20 (SLGKGL) contributes to the ATP binding site. Position 55 (Tyr55) interacts with L-glutamine. Asp72 contacts ATP. Mg(2+) is bound by residues Asp72 and Glu142. CTP is bound by residues 149 to 151 (DIE), 188 to 193 (KTKPTQ), and Lys224. Residues 188 to 193 (KTKPTQ) and Lys224 contribute to the UTP site. One can recognise a Glutamine amidotransferase type-1 domain in the interval 294-533 (RIGLVGKYVQ…IQAAILYSRN (240 aa)). Gly353 contacts L-glutamine. Residue Cys380 is the Nucleophile; for glutamine hydrolysis of the active site. L-glutamine-binding positions include 381–384 (LGMQ), Glu404, and Arg461. Active-site residues include His506 and Glu508.

Belongs to the CTP synthase family. As to quaternary structure, homotetramer.

The catalysed reaction is UTP + L-glutamine + ATP + H2O = CTP + L-glutamate + ADP + phosphate + 2 H(+). It catalyses the reaction L-glutamine + H2O = L-glutamate + NH4(+). It carries out the reaction UTP + NH4(+) + ATP = CTP + ADP + phosphate + 2 H(+). Its pathway is pyrimidine metabolism; CTP biosynthesis via de novo pathway; CTP from UDP: step 2/2. Allosterically activated by GTP, when glutamine is the substrate; GTP has no effect on the reaction when ammonia is the substrate. The allosteric effector GTP functions by stabilizing the protein conformation that binds the tetrahedral intermediate(s) formed during glutamine hydrolysis. Inhibited by the product CTP, via allosteric rather than competitive inhibition. Catalyzes the ATP-dependent amination of UTP to CTP with either L-glutamine or ammonia as the source of nitrogen. Regulates intracellular CTP levels through interactions with the four ribonucleotide triphosphates. The protein is CTP synthase of Chlamydia felis (strain Fe/C-56) (Chlamydophila felis).